A 105-amino-acid polypeptide reads, in one-letter code: Phosphoribosyl-AMP cyclohydrolase (105 aa).

A Mg(2+)-binding site is contributed by aspartate 72. A Zn(2+)-binding site is contributed by cysteine 73. Residues aspartate 74 and aspartate 76 each coordinate Mg(2+). Residues cysteine 89 and cysteine 96 each coordinate Zn(2+).

The protein belongs to the PRA-CH family. In terms of assembly, homodimer. The cofactor is Mg(2+). Zn(2+) is required as a cofactor.

It localises to the cytoplasm. It carries out the reaction 1-(5-phospho-beta-D-ribosyl)-5'-AMP + H2O = 1-(5-phospho-beta-D-ribosyl)-5-[(5-phospho-beta-D-ribosylamino)methylideneamino]imidazole-4-carboxamide. The protein operates within amino-acid biosynthesis; L-histidine biosynthesis; L-histidine from 5-phospho-alpha-D-ribose 1-diphosphate: step 3/9. Functionally, catalyzes the hydrolysis of the adenine ring of phosphoribosyl-AMP. This Listeria monocytogenes serotype 4a (strain HCC23) protein is Phosphoribosyl-AMP cyclohydrolase.